Here is a 296-residue protein sequence, read N- to C-terminus: Cyclin-dependent kinase 1 (296 aa).

Residues 5 to 288 (FQKLEKIGEG…AKNGLSHKYF (284 aa)) enclose the Protein kinase domain. Residues 11 to 19 (IGEGTYGVV) and Lys34 contribute to the ATP site. The active-site Proton acceptor is Asp130.

It belongs to the protein kinase superfamily. CMGC Ser/Thr protein kinase family. CDC2/CDKX subfamily.

The protein resides in the nucleus. The catalysed reaction is L-seryl-[protein] + ATP = O-phospho-L-seryl-[protein] + ADP + H(+). The enzyme catalyses L-threonyl-[protein] + ATP = O-phospho-L-threonyl-[protein] + ADP + H(+). Cyclin-dependent kinase that acts as a master regulator of the mitotic and meiotic cell cycles. This chain is Cyclin-dependent kinase 1, found in Encephalitozoon cuniculi (strain GB-M1) (Microsporidian parasite).